A 25-amino-acid polypeptide reads, in one-letter code: U1-poneritoxin-Ng1b (25 aa).

Expressed by the venom gland.

Its subcellular location is the secreted. The protein resides in the target cell membrane. In terms of biological role, has a broad spectrum of activity against both Gram-positive and Gram-negative bacteria and S.cerevisiae. Has insecticidal and hemolytic activities. May act by disrupting the integrity of the bacterial cell membrane. In Neoponera goeldii (Ponerine ant), this protein is U1-poneritoxin-Ng1b.